A 294-amino-acid chain; its full sequence is 4-hydroxy-tetrahydrodipicolinate synthase (294 aa).

Thr-44 is a pyruvate binding site. Catalysis depends on Tyr-132, which acts as the Proton donor/acceptor. Lys-160 functions as the Schiff-base intermediate with substrate in the catalytic mechanism. Residue Val-202 coordinates pyruvate.

This sequence belongs to the DapA family. As to quaternary structure, homotetramer; dimer of dimers.

The protein resides in the cytoplasm. It carries out the reaction L-aspartate 4-semialdehyde + pyruvate = (2S,4S)-4-hydroxy-2,3,4,5-tetrahydrodipicolinate + H2O + H(+). It functions in the pathway amino-acid biosynthesis; L-lysine biosynthesis via DAP pathway; (S)-tetrahydrodipicolinate from L-aspartate: step 3/4. Its function is as follows. Catalyzes the condensation of (S)-aspartate-beta-semialdehyde [(S)-ASA] and pyruvate to 4-hydroxy-tetrahydrodipicolinate (HTPA). This is 4-hydroxy-tetrahydrodipicolinate synthase from Leptospira borgpetersenii serovar Hardjo-bovis (strain L550).